The following is a 158-amino-acid chain: Transcription elongation factor GreA (158 aa).

The protein belongs to the GreA/GreB family.

Necessary for efficient RNA polymerase transcription elongation past template-encoded arresting sites. The arresting sites in DNA have the property of trapping a certain fraction of elongating RNA polymerases that pass through, resulting in locked ternary complexes. Cleavage of the nascent transcript by cleavage factors such as GreA or GreB allows the resumption of elongation from the new 3'terminus. GreA releases sequences of 2 to 3 nucleotides. This chain is Transcription elongation factor GreA, found in Macrococcus caseolyticus (strain JCSC5402) (Macrococcoides caseolyticum).